Consider the following 116-residue polypeptide: Large ribosomal subunit protein uL22 (116 aa).

Belongs to the universal ribosomal protein uL22 family. In terms of assembly, part of the 50S ribosomal subunit.

In terms of biological role, this protein binds specifically to 23S rRNA; its binding is stimulated by other ribosomal proteins, e.g. L4, L17, and L20. It is important during the early stages of 50S assembly. It makes multiple contacts with different domains of the 23S rRNA in the assembled 50S subunit and ribosome. Functionally, the globular domain of the protein is located near the polypeptide exit tunnel on the outside of the subunit, while an extended beta-hairpin is found that lines the wall of the exit tunnel in the center of the 70S ribosome. The polypeptide is Large ribosomal subunit protein uL22 (Gloeobacter violaceus (strain ATCC 29082 / PCC 7421)).